Consider the following 213-residue polypeptide: High frequency lysogenization protein HflD homolog (213 aa).

Residues 79–126 (QGLNAELTRYTLSLMVLERKLSSAKGALDTLGNRINGLQRQLEHFDLQ) adopt a coiled-coil conformation.

The protein belongs to the HflD family.

It localises to the cytoplasm. It is found in the cell inner membrane. This chain is High frequency lysogenization protein HflD homolog, found in Shigella dysenteriae serotype 1 (strain Sd197).